A 2255-amino-acid polypeptide reads, in one-letter code: Non-reducing polyketide synthase nvfA (2255 aa).

Positions Ile13 to Glu251 are N-terminal acylcarrier protein transacylase domain (SAT). In terms of domain architecture, Ketosynthase family 3 (KS3) spans Val365–Gln781. Residues Cys530, His665, and His704 each act as for beta-ketoacyl synthase activity in the active site. The malonyl-CoA:ACP transacylase (MAT) domain stretch occupies residues Leu887–Ala1187. Catalysis depends on Ser974, which acts as the For acyl/malonyl transferase activity. The tract at residues Glu1229–Ser1357 is N-terminal hotdog fold. The region spanning Glu1229–Thr1536 is the PKS/mFAS DH domain. Residues Gly1232–Leu1535 are product template (PT) domain. His1262 functions as the Proton acceptor; for dehydratase activity in the catalytic mechanism. The C-terminal hotdog fold stretch occupies residues Ser1385–Thr1536. The active-site Proton donor; for dehydratase activity is Asp1443. The region spanning Thr1581 to Ala1655 is the Carrier domain. Ser1615 is modified (O-(pantetheine 4'-phosphoryl)serine). Positions His1809–Asn2042 are methyltransferase (CMeT) domain. Residues Leu2109 to Tyr2227 are thioesterase (TE) domain. Ser2194 functions as the For thioesterase activity in the catalytic mechanism.

The catalysed reaction is 3 malonyl-CoA + acetyl-CoA + 2 S-adenosyl-L-methionine = 3,5-dimethylorsellinate + 2 S-adenosyl-L-homocysteine + 3 CO2 + 4 CoA. Its pathway is secondary metabolite biosynthesis; terpenoid biosynthesis. Its function is as follows. Non-reducing polyketide synthase; part of the gene cluster that mediates the biosynthesis of novofumigatonin, a heavily oxygenated meroterpenoid containing a unique orthoester moiety. The first step of the pathway is the synthesis of 3,5-dimethylorsellinic acid (DMOA) by the polyketide synthase nvfA via condensation of one acetyl-CoA starter unit with 3 malonyl-CoA units and 2 methylations. DMOA is then converted to farnesyl-DMOA by the farnesyltransferase nvfB. Epoxydation by FAD-dependent monooxygenase nvfK, followed by a protonation-initiated cyclization catalyzed by the terpene cyclase nvfL leads to the production of asnavolin H. The short chain dehydrogenase nvfC then as a 3-OH dehydrogenase of asnovolin H to yield chemesin D. There are two branches to synthesize asnovolin A from chemesin D. In one branch, chemesin D undergoes Baeyer-Villiger oxidation by nvfH, methylation by nvfJ, and enoyl reduction by the nvfM D enoylreductase that reduces the double bond between C-5'and C-6', to form respectively asnovolin I, asnovolin K, and asnovolin A. In the other branch, the methylation precedes the Baeyer-Villiger oxidation and the enoyl reduction to yield asnovolin A via the asnovolin J intermediate. Asnovolin A is further converted to fumigatonoid A by the Fe(II)/2-oxoglutarate-dependent dioxygenase nvfI that catalyzes an endoperoxidation reaction. The alpha/beta hydrolase nvfD then acts as an epimerase that converts fumigatonoid A to its C-5' epimer, which then undergoes spontaneous or nvfD-catalyzed lactonization. The following step utilizes the ketoreductase nvfG to produce fumigatonoid B. The dioxygenase nvfE further converts fumigatonoid B into fumigatonoid C. Finally the Fe(II)/2-oxoglutarate-dependent dioxygenase nvfF catalyzes two rounds of oxidation to transform fumigatonoid C into the end product, novofumigatonin A. This chain is Non-reducing polyketide synthase nvfA, found in Aspergillus novofumigatus (strain IBT 16806).